A 507-amino-acid polypeptide reads, in one-letter code: ATP synthase subunit alpha, chloroplastic (507 aa).

An ATP-binding site is contributed by 170 to 177 (GDRQTGKT).

This sequence belongs to the ATPase alpha/beta chains family. As to quaternary structure, F-type ATPases have 2 components, CF(1) - the catalytic core - and CF(0) - the membrane proton channel. CF(1) has five subunits: alpha(3), beta(3), gamma(1), delta(1), epsilon(1). CF(0) has four main subunits: a, b, b' and c.

The protein localises to the plastid. Its subcellular location is the chloroplast thylakoid membrane. The enzyme catalyses ATP + H2O + 4 H(+)(in) = ADP + phosphate + 5 H(+)(out). Produces ATP from ADP in the presence of a proton gradient across the membrane. The alpha chain is a regulatory subunit. This Oryza nivara (Indian wild rice) protein is ATP synthase subunit alpha, chloroplastic.